The following is a 699-amino-acid chain: Elongation factor G (699 aa).

The tr-type G domain maps to 8 to 283 (EHIRNIGICA…AIVDFLPSPI (276 aa)). GTP-binding positions include 17–24 (AHIDAGKT), 81–85 (DTPGH), and 135–138 (NKMD).

The protein belongs to the TRAFAC class translation factor GTPase superfamily. Classic translation factor GTPase family. EF-G/EF-2 subfamily.

It is found in the cytoplasm. Functionally, catalyzes the GTP-dependent ribosomal translocation step during translation elongation. During this step, the ribosome changes from the pre-translocational (PRE) to the post-translocational (POST) state as the newly formed A-site-bound peptidyl-tRNA and P-site-bound deacylated tRNA move to the P and E sites, respectively. Catalyzes the coordinated movement of the two tRNA molecules, the mRNA and conformational changes in the ribosome. The protein is Elongation factor G of Rickettsia typhi (strain ATCC VR-144 / Wilmington).